Here is a 405-residue protein sequence, read N- to C-terminus: L-rhamnonate dehydratase (405 aa).

Residues His-33 and Arg-59 each coordinate substrate. Positions 226, 252, and 280 each coordinate Mg(2+). Residue His-329 is the Proton acceptor of the active site. Glu-349 is a substrate binding site.

Belongs to the mandelate racemase/muconate lactonizing enzyme family. RhamD subfamily. In terms of assembly, homooctamer; tetramer of dimers. Mg(2+) serves as cofactor.

It carries out the reaction L-rhamnonate = 2-dehydro-3-deoxy-L-rhamnonate + H2O. In terms of biological role, catalyzes the dehydration of L-rhamnonate to 2-keto-3-deoxy-L-rhamnonate (KDR). Can also dehydrate L-lyxonate and L-mannonate, although less efficiently, but not 2-keto-4-hydroxyheptane-1,7-dioate. This Salmonella typhimurium (strain LT2 / SGSC1412 / ATCC 700720) protein is L-rhamnonate dehydratase (rhmD).